A 594-amino-acid polypeptide reads, in one-letter code: Proteasome-associated ATPase (594 aa).

Residues 20–98 (DDLAAQVTYL…KEEIDRLAQP (79 aa)) adopt a coiled-coil conformation. An ATP-binding site is contributed by 282–287 (GCGKTL). The interval 593–594 (YL) is docks into pockets in the proteasome alpha-ring.

Belongs to the AAA ATPase family. In terms of assembly, homohexamer. Assembles into a hexameric ring structure that caps the 20S proteasome core. Strongly interacts with the prokaryotic ubiquitin-like protein Pup through a hydrophobic interface; the interacting region of ARC lies in its N-terminal coiled-coil domain. There is one Pup binding site per ARC hexamer ring. Upon ATP-binding, the C-terminus of ARC interacts with the alpha-rings of the proteasome core, possibly by binding to the intersubunit pockets.

The protein operates within protein degradation; proteasomal Pup-dependent pathway. ATPase which is responsible for recognizing, binding, unfolding and translocation of pupylated proteins into the bacterial 20S proteasome core particle. May be essential for opening the gate of the 20S proteasome via an interaction with its C-terminus, thereby allowing substrate entry and access to the site of proteolysis. Thus, the C-termini of the proteasomal ATPase may function like a 'key in a lock' to induce gate opening and therefore regulate proteolysis. This chain is Proteasome-associated ATPase, found in Catenulispora acidiphila (strain DSM 44928 / JCM 14897 / NBRC 102108 / NRRL B-24433 / ID139908).